A 537-amino-acid chain; its full sequence is MIPINISPATVVLCGSIVTVSIAYVIFVVGHRRKGFPPGPPTLPVIGNIHQLPTTGAHFKFTEWAQKYGGIYSLKLGTGTALVITDREIVKKLMDKKSSITSDRPPSYVSYDLITKGDHLLVMHYNETWRKIRKYMHQFFRESECEKKHITLQDAEATQMMLEFLETPDNHNLHTKRFSNSIISTLLFGLRTPTYDSPHAKHLYDIMERWSAVMEPGNTPPVDIYPIFKYIPESLFGNWISRASGVGRDMERLYANMISQFKIRAEDPKISRTHESFFDILLREQEKTREFTDHEIAFIGGVQLEGGSDTSASILTAFVQAMVNWPEVQRVAQEEIDRVIGEDRSPTWNDFAALPYINAIMKETHRWRPVTPLSFPHCLTKDEYLDGFLLPKGATIILNVWGIQNDESVYPRPEEFDPSRFKDHKLLAPEYAVSDWKLRDHYSFGVGRRICPGIHLAERNVWLGVAKLLWAFKFEKATGADGQPIEMNVDPKTGYTEGFLHCALPFKCKVTVRSEERRKTILKEFELAKQVFNEYTG.

Residues 9-29 (ATVVLCGSIVTVSIAYVIFVV) form a helical membrane-spanning segment. Asparagine 126 is a glycosylation site (N-linked (GlcNAc...) asparagine). Residue cysteine 451 participates in heme binding.

Belongs to the cytochrome P450 family. Heme serves as cofactor.

The protein resides in the membrane. The protein operates within secondary metabolite biosynthesis; terpenoid biosynthesis. Its function is as follows. Cytochrome P450 monooxygenase; part of the gene cluster that mediates the biosynthesis of sesquiterpenyl epoxy-cyclohexenoids (SECs) such as anthrobotrisins and arthrosporols, metabolites that possess a novel hybrid carbon skeleton consisting of a polyketide-derived epoxycyclohexenol combined with a terpenoid-derived monocyclic sesquiterpenol substructure (PKS-PTS hybrid). The SEC pathway plays an important role for fungal soil colonization via decreasing fungal nematode-capturing ability. Within the pathway, the cytochrome P450 monooxygenase AOL_s00215g282 acts as a m-cresol hydrolase that converts m-cresol to toluquinol. The pathway begins with the biosynthesis of 6-methylsalicylic acid (6-MSA), the first precursor of the polyketide-derived epoxycyclohexenol in arthrosporols, by the polyketide synthase (PKS) AOL_s00215g283 via condensation of 1 acetate and 3 malonate units. The 6-methylsalicylic acid decarboxylase AOL_s00215g281 then catalyzes the decarboxylation of 6-methylsalicylic acid to yield m-cresol. The cytochrome P450 monooxygenase AOL_s00215g282 further oxidizes m-cresol to yield toluquinol. With the assistance of the oxidoreductase AOL_s00215g277, the polyprenyl transferase AOL_s00215g276 catalyzes the farnesylation of toluquinol to produce farnesyl hydroquinone, the hybrid precursor for biosynthesis of SECs. Farnesyl hydroquinone undergoes epoxidation and then subsequent dehydrogenation to form farnesyl epoxy-quinone, the first and simplest SEC. The cytochrome P450 monooxygenase AOL_s00215g278 and the FAD-dependent monooxygenase AOL_s00215g279 might be involved in the oxygenation of the phenol moiety, most likely in the epoxy formation. The cytochrome P450 monooxygenases AOL_s00215g274 and AOL_s00215g280 are involved in specific regional ketone reductions at respectively C-4 and C-1 of farnesyl epoxy-quinone PubMed:33823587. In Arthrobotrys oligospora (strain ATCC 24927 / CBS 115.81 / DSM 1491) (Nematode-trapping fungus), this protein is Cytochrome P450 monooxygenase AOL_s00215g282.